The sequence spans 220 residues: uncharacterized protein (220 aa).

The protein belongs to the DadA oxidoreductase family. Requires FAD as cofactor.

This is an uncharacterized protein from Halorhodospira halophila (Ectothiorhodospira halophila).